Here is a 159-residue protein sequence, read N- to C-terminus: Large ribosomal subunit protein uL22 (159 aa).

The protein belongs to the universal ribosomal protein uL22 family. Part of the 50S ribosomal subunit.

Its function is as follows. This protein binds specifically to 23S rRNA; its binding is stimulated by other ribosomal proteins, e.g. L4, L17, and L20. It is important during the early stages of 50S assembly. It makes multiple contacts with different domains of the 23S rRNA in the assembled 50S subunit and ribosome. The globular domain of the protein is located near the polypeptide exit tunnel on the outside of the subunit, while an extended beta-hairpin is found that lines the wall of the exit tunnel in the center of the 70S ribosome. The protein is Large ribosomal subunit protein uL22 of Thermotoga sp. (strain RQ2).